The sequence spans 376 residues: 2-oxoglutarate synthase subunit KorA (376 aa).

Heterotetramer of the KorA, KorB, KorC and KorD subunits.

The enzyme catalyses 2 oxidized [2Fe-2S]-[ferredoxin] + 2-oxoglutarate + CoA = succinyl-CoA + 2 reduced [2Fe-2S]-[ferredoxin] + CO2 + H(+). This chain is 2-oxoglutarate synthase subunit KorA (korA), found in Methanothermobacter thermautotrophicus (strain ATCC 29096 / DSM 1053 / JCM 10044 / NBRC 100330 / Delta H) (Methanobacterium thermoautotrophicum).